Consider the following 365-residue polypeptide: D-alanine--D-alanine ligase (365 aa).

An ATP-grasp domain is found at 135 to 345 (KLLLKSFNIP…YESLVDNLVS (211 aa)). 168–223 (KQSLNYPVIVKPAMLGSSIGISIAYNDTQIEKCIEEAFEYDLTVVVEKFMKVREIE) provides a ligand contact to ATP. Asp-298, Glu-312, and Asn-314 together coordinate Mg(2+).

It belongs to the D-alanine--D-alanine ligase family. The cofactor is Mg(2+). It depends on Mn(2+) as a cofactor.

Its subcellular location is the cytoplasm. The enzyme catalyses 2 D-alanine + ATP = D-alanyl-D-alanine + ADP + phosphate + H(+). It functions in the pathway cell wall biogenesis; peptidoglycan biosynthesis. Its function is as follows. Cell wall formation. This Borrelia hermsii (strain HS1 / DAH) protein is D-alanine--D-alanine ligase.